The following is a 346-amino-acid chain: NADH-ubiquinone oxidoreductase chain 2 (346 aa).

Helical transmembrane passes span 1–21 (MNPH…TITI), 25–45 (HWVL…PLIS), 60–80 (FLTQ…NAWA), 95–115 (CLLL…HFWF), 124–144 (LMTA…LLLM), 149–169 (LNPA…GWMG), 178–195 (ILAF…IILV), 200–219 (LALL…FMAL), 242–262 (ATLM…GFMP), 274–294 (EMTP…FFYL), and 326–346 (AILA…HAIV).

Belongs to the complex I subunit 2 family.

It is found in the mitochondrion inner membrane. It carries out the reaction a ubiquinone + NADH + 5 H(+)(in) = a ubiquinol + NAD(+) + 4 H(+)(out). Core subunit of the mitochondrial membrane respiratory chain NADH dehydrogenase (Complex I) that is believed to belong to the minimal assembly required for catalysis. Complex I functions in the transfer of electrons from NADH to the respiratory chain. The immediate electron acceptor for the enzyme is believed to be ubiquinone. In Mareca falcata (Falcated duck), this protein is NADH-ubiquinone oxidoreductase chain 2 (MT-ND2).